A 201-amino-acid chain; its full sequence is Large ribosomal subunit protein uL4 (201 aa).

Positions 44–71 (RAQKTRAEVTGSGKKPWRQKGTGRARSG) are disordered.

It belongs to the universal ribosomal protein uL4 family. Part of the 50S ribosomal subunit.

Functionally, one of the primary rRNA binding proteins, this protein initially binds near the 5'-end of the 23S rRNA. It is important during the early stages of 50S assembly. It makes multiple contacts with different domains of the 23S rRNA in the assembled 50S subunit and ribosome. Forms part of the polypeptide exit tunnel. The sequence is that of Large ribosomal subunit protein uL4 from Pectobacterium carotovorum subsp. carotovorum (strain PC1).